A 126-amino-acid polypeptide reads, in one-letter code: Fluoride-specific ion channel FluC (126 aa).

4 helical membrane-spanning segments follow: residues 7–27 (LWLALGGAVGAVCRQAAVLLL), 36–56 (FPAAVLLINVLGSFLLGLTLA), 74–94 (GVLGAFTTFSTFSTELDGLLL), and 98–118 (GGLALAYAALSVGLGLTAAVA). Na(+) contacts are provided by Gly-77 and Thr-80.

It belongs to the fluoride channel Fluc/FEX (TC 1.A.43) family.

It localises to the cell membrane. The enzyme catalyses fluoride(in) = fluoride(out). With respect to regulation, na(+) is not transported, but it plays an essential structural role and its presence is essential for fluoride channel function. In terms of biological role, fluoride-specific ion channel. Important for reducing fluoride concentration in the cell, thus reducing its toxicity. The sequence is that of Fluoride-specific ion channel FluC from Deinococcus radiodurans (strain ATCC 13939 / DSM 20539 / JCM 16871 / CCUG 27074 / LMG 4051 / NBRC 15346 / NCIMB 9279 / VKM B-1422 / R1).